The primary structure comprises 311 residues: GTP cyclohydrolase FolE2 (311 aa).

It belongs to the GTP cyclohydrolase IV family.

It carries out the reaction GTP + H2O = 7,8-dihydroneopterin 3'-triphosphate + formate + H(+). It functions in the pathway cofactor biosynthesis; 7,8-dihydroneopterin triphosphate biosynthesis; 7,8-dihydroneopterin triphosphate from GTP: step 1/1. Functionally, converts GTP to 7,8-dihydroneopterin triphosphate. This Xanthomonas campestris pv. campestris (strain B100) protein is GTP cyclohydrolase FolE2.